The primary structure comprises 128 residues: Small nuclear ribonucleoprotein SmD3a (128 aa).

Residues 7 to 79 (IPVKLLHESS…VRFLVIPDML (73 aa)) form the Sm domain. The disordered stretch occupies residues 90–128 (GKGKSASLGVGRGRGAAMRAKGTGRGTGGGRGAVPPVRR). Residues 112 to 121 (TGRGTGGGRG) show a composition bias toward gly residues.

This sequence belongs to the snRNP core protein family. Expressed in young seedlings, roots, leaves, flowers and immature siliques.

Its subcellular location is the cytoplasm. It localises to the cytosol. It is found in the nucleus. Its function is as follows. Core component of the spliceosomal U1, U2, U4 and U5 small nuclear ribonucleoproteins (snRNPs), the building blocks of the spliceosome. May play a minor role in the splicing of cellular pre-mRNAs. In Arabidopsis thaliana (Mouse-ear cress), this protein is Small nuclear ribonucleoprotein SmD3a.